The following is a 241-amino-acid chain: MFVDSMEEHKLWVIVPAAGVGSRMGGERPKQYLKLIDRSVLEHTLDRLLSAPGISQIYLPLHPQDKWWPEIADKYTGKVISVAGGEERSTSVLNALEKIESHAAIEDWVLVHDVARPCFRISDISNLMRLLWNTQPGGLLGVPVADTVKRTNEKGEVLATVSRANLWRAYTPQMFRFGALLSALRQGSEKGVHITDEASAIEAQGLKPVMVEGHSDNIKITHPQDLPLAEIFLRRIMQEEE.

It belongs to the IspD/TarI cytidylyltransferase family. IspD subfamily.

The catalysed reaction is 2-C-methyl-D-erythritol 4-phosphate + CTP + H(+) = 4-CDP-2-C-methyl-D-erythritol + diphosphate. The protein operates within isoprenoid biosynthesis; isopentenyl diphosphate biosynthesis via DXP pathway; isopentenyl diphosphate from 1-deoxy-D-xylulose 5-phosphate: step 2/6. Functionally, catalyzes the formation of 4-diphosphocytidyl-2-C-methyl-D-erythritol from CTP and 2-C-methyl-D-erythritol 4-phosphate (MEP). The sequence is that of 2-C-methyl-D-erythritol 4-phosphate cytidylyltransferase from Hahella chejuensis (strain KCTC 2396).